A 951-amino-acid chain; its full sequence is Protein translocase subunit SecA (951 aa).

ATP is bound by residues Gln90, 108–112 (GEGKT), and Asp509.

The protein belongs to the SecA family. In terms of assembly, monomer and homodimer. Part of the essential Sec protein translocation apparatus which comprises SecA, SecYEG and auxiliary proteins SecDF. Other proteins may also be involved.

The protein localises to the cell inner membrane. It localises to the cellular thylakoid membrane. The protein resides in the cytoplasm. The enzyme catalyses ATP + H2O + cellular proteinSide 1 = ADP + phosphate + cellular proteinSide 2.. Functionally, part of the Sec protein translocase complex. Interacts with the SecYEG preprotein conducting channel. Has a central role in coupling the hydrolysis of ATP to the transfer of proteins into and across the cell membrane, serving as an ATP-driven molecular motor driving the stepwise translocation of polypeptide chains across the membrane. Probably participates in protein translocation into and across both the cytoplasmic and thylakoid membranes in cyanobacterial cells. The protein is Protein translocase subunit SecA of Prochlorococcus marinus (strain MIT 9303).